A 352-amino-acid polypeptide reads, in one-letter code: Keratocan (352 aa).

An N-terminal signal peptide occupies residues 1–20 (MASTICFILWVVFVTDTVWT). Residues 33–71 (EDWTMHDFDCPRECFCPPSFPTALYCENRGLKEIPAIPS) enclose the LRRNT domain. 2 disulfides stabilise this stretch: cysteine 42/cysteine 48 and cysteine 46/cysteine 58. LRR repeat units lie at residues 72 to 93 (RIWYLYLENNLIETIPEKPFEN), 96 to 117 (QLRWINLNKNKITNYGIEKGAL), 122 to 142 (KLLFLFLEDNELEEVPSPLPR), 143 to 164 (SLEQLQLARNKVSRIPQGTFSN), 167 to 180 (NLTLLDLQHNKLLD), 193 to 214 (NLMQLNMAKNALRNMPPRLPAN), 215 to 235 (TMQVFLDNNSIEGIPENYFNV), and 238 to 258 (KVAFLRLNHNKLSDAGLPSSG). Asparagine 93 is a glycosylation site (N-linked (GlcNAc...) (keratan sulfate) asparagine). Asparagine 167 is a glycosylation site (N-linked (GlcNAc...) (keratan sulfate) asparagine). The N-linked (GlcNAc...) asparagine glycan is linked to asparagine 222. Asparagine 260 carries an N-linked (GlcNAc...) (keratan sulfate) asparagine glycan. LRR repeat units lie at residues 263-282 (SILDLQLSHNQLTKVPKISA) and 283-304 (HLQHLHLDHNKIRNVNVSVICP). N-linked (GlcNAc...) asparagine glycosylation occurs at asparagine 298. A disulfide bridge connects residues cysteine 303 and cysteine 343.

Belongs to the small leucine-rich proteoglycan (SLRP) family. SLRP class II subfamily. Post-translationally, binds three long, highly sulfated keratan sulfate chains in the cornea but short, non-sulfated poly(N-acetyllactosamine) chains in other tissues. The N-terminus is blocked. As to expression, abundant in cornea and sclera but also found in other tissues.

It is found in the secreted. It localises to the extracellular space. Its subcellular location is the extracellular matrix. Its function is as follows. May be important in developing and maintaining corneal transparency and for the structure of the stromal matrix. The protein is Keratocan (KERA) of Bos taurus (Bovine).